The primary structure comprises 245 residues: 14-3-3 protein zeta/delta (245 aa).

M1 carries the N-acetylmethionine modification. K3 carries the post-translational modification N6-acetyllysine. At S58 the chain carries Phosphoserine; by PKA. Position 68 is an N6-acetyllysine (K68). Phosphoserine occurs at positions 184, 207, and 210. Residue T232 is modified to Phosphothreonine; by CK1.

This sequence belongs to the 14-3-3 family. Interacts with CDK16 and BSPRY. Interacts with WEE1 (C-terminal). Interacts with SAMSN1. Interacts with MLF1 (phosphorylated form); the interaction retains it in the cytoplasm. Interacts with Thr-phosphorylated ITGB2. Interacts with BCL2L11. Homodimer. Heterodimerizes with YWHAE. Homo- and heterodimerization is inhibited by phosphorylation on Ser-58. Interacts with FOXO4, NOXA1, SSH1 and ARHGEF2. Interacts with Pseudomonas aeruginosa exoS (unphosphorylated form). Interacts with BAX; the interaction occurs in the cytoplasm. Under stress conditions, MAPK8-mediated phosphorylation releases BAX to mitochondria. Interacts with phosphorylated RAF1; the interaction is inhibited when YWHAZ is phosphorylated on Thr-232. Interacts with TP53; the interaction enhances p53 transcriptional activity. The Ser-58 phosphorylated form inhibits this interaction and p53 transcriptional activity. Interacts with ABL1 (phosphorylated form); the interaction retains ABL1 in the cytoplasm. Interacts with PKA-phosphorylated AANAT; the interaction modulates AANAT enzymatic activity by increasing affinity for arylalkylamines and acetyl-CoA and protecting the enzyme from dephosphorylation and proteasomal degradation. It may also prevent thiol-dependent inactivation. Interacts with AKT1; the interaction phosphorylates YWHAZ and modulates dimerization. Interacts with GAB2 and TLK2. Interacts with the 'Thr-369' phosphorylated form of DAPK2. Interacts with PI4KB, TBC1D22A and TBC1D22B. Interacts with ZFP36L1 (via phosphorylated form); this interaction occurs in a p38 MAPK- and AKT-signaling pathways. Interacts with SLITRK1. Interacts with AK5, LDB1, MADD, MARK3, PDE1A and SMARCB1. Interacts with YWHAZ. Interacts with MEFV. Interacts with ADAM22 (via C-terminus). Post-translationally, the delta, brain-specific form differs from the zeta form in being phosphorylated. Phosphorylation on Ser-184 by MAPK8; promotes dissociation of BAX and translocation of BAX to mitochondria. Phosphorylation on Thr-232; inhibits binding of RAF1. Phosphorylated on Ser-58 by PKA and protein kinase C delta type catalytic subunit in a sphingosine-dependent fashion. Phosphorylation on Ser-58 by PKA; disrupts homodimerization and heterodimerization with YHAE and TP53. As to expression, highly expressed in brain (at protein level).

The protein localises to the cytoplasm. Its subcellular location is the melanosome. Functionally, adapter protein implicated in the regulation of a large spectrum of both general and specialized signaling pathways. Binds to a large number of partners, usually by recognition of a phosphoserine or phosphothreonine motif. Binding generally results in the modulation of the activity of the binding partner. Promotes cytosolic retention and inactivation of TFEB transcription factor by binding to phosphorylated TFEB. Induces ARHGEF7 activity on RAC1 as well as lamellipodia and membrane ruffle formation. In neurons, regulates spine maturation through the modulation of ARHGEF7 activity. This is 14-3-3 protein zeta/delta (YWHAZ) from Ovis aries (Sheep).